Reading from the N-terminus, the 156-residue chain is Transcriptional repressor NrdR (156 aa).

A zinc finger lies at 3-34 (CPYCRHPDSRVVDSREAEEGAAIRRRRSCPNC). Residues 46–136 (LSVVKRSGVT…VYRSFTSAED (91 aa)) enclose the ATP-cone domain.

It belongs to the NrdR family. It depends on Zn(2+) as a cofactor.

In terms of biological role, negatively regulates transcription of bacterial ribonucleotide reductase nrd genes and operons by binding to NrdR-boxes. This Nocardia farcinica (strain IFM 10152) protein is Transcriptional repressor NrdR.